The primary structure comprises 379 residues: Dual-specificity RNA methyltransferase RlmN (379 aa).

Glu-95 acts as the Proton acceptor in catalysis. Residues Glu-101 to Asp-345 enclose the Radical SAM core domain. Cys-108 and Cys-350 are joined by a disulfide. [4Fe-4S] cluster is bound by residues Cys-115, Cys-119, and Cys-122. S-adenosyl-L-methionine-binding positions include Gly-176–Glu-177, Ser-208, Ser-230–His-232, and Asn-307. Cys-350 serves as the catalytic S-methylcysteine intermediate.

Belongs to the radical SAM superfamily. RlmN family. [4Fe-4S] cluster is required as a cofactor.

It is found in the cytoplasm. The enzyme catalyses adenosine(2503) in 23S rRNA + 2 reduced [2Fe-2S]-[ferredoxin] + 2 S-adenosyl-L-methionine = 2-methyladenosine(2503) in 23S rRNA + 5'-deoxyadenosine + L-methionine + 2 oxidized [2Fe-2S]-[ferredoxin] + S-adenosyl-L-homocysteine. It catalyses the reaction adenosine(37) in tRNA + 2 reduced [2Fe-2S]-[ferredoxin] + 2 S-adenosyl-L-methionine = 2-methyladenosine(37) in tRNA + 5'-deoxyadenosine + L-methionine + 2 oxidized [2Fe-2S]-[ferredoxin] + S-adenosyl-L-homocysteine. Functionally, specifically methylates position 2 of adenine 2503 in 23S rRNA and position 2 of adenine 37 in tRNAs. m2A2503 modification seems to play a crucial role in the proofreading step occurring at the peptidyl transferase center and thus would serve to optimize ribosomal fidelity. This is Dual-specificity RNA methyltransferase RlmN from Burkholderia lata (strain ATCC 17760 / DSM 23089 / LMG 22485 / NCIMB 9086 / R18194 / 383).